Here is a 282-residue protein sequence, read N- to C-terminus: Pantothenate synthetase (282 aa).

31–38 contributes to the ATP binding site; it reads MGALHDGH. His-38 acts as the Proton donor in catalysis. A (R)-pantoate-binding site is contributed by Gln-62. Gln-62 contributes to the beta-alanine binding site. 148-151 contributes to the ATP binding site; that stretch reads GKKD. Gln-154 provides a ligand contact to (R)-pantoate. ATP is bound by residues Val-177 and 185–188; that span reads KSSR.

It belongs to the pantothenate synthetase family. As to quaternary structure, homodimer.

It is found in the cytoplasm. The enzyme catalyses (R)-pantoate + beta-alanine + ATP = (R)-pantothenate + AMP + diphosphate + H(+). The protein operates within cofactor biosynthesis; (R)-pantothenate biosynthesis; (R)-pantothenate from (R)-pantoate and beta-alanine: step 1/1. In terms of biological role, catalyzes the condensation of pantoate with beta-alanine in an ATP-dependent reaction via a pantoyl-adenylate intermediate. The chain is Pantothenate synthetase from Staphylococcus saprophyticus subsp. saprophyticus (strain ATCC 15305 / DSM 20229 / NCIMB 8711 / NCTC 7292 / S-41).